A 276-amino-acid polypeptide reads, in one-letter code: Pantothenate synthetase (276 aa).

27–34 is an ATP binding site; sequence MGALHKGH. Catalysis depends on His-34, which acts as the Proton donor. Gln-58 serves as a coordination point for (R)-pantoate. Gln-58 contacts beta-alanine. 147–150 contacts ATP; it reads GKKD. Gln-153 lines the (R)-pantoate pocket. Residues Val-176 and 184–187 each bind ATP; that span reads LSSR.

The protein belongs to the pantothenate synthetase family. Homodimer.

It localises to the cytoplasm. The enzyme catalyses (R)-pantoate + beta-alanine + ATP = (R)-pantothenate + AMP + diphosphate + H(+). It participates in cofactor biosynthesis; (R)-pantothenate biosynthesis; (R)-pantothenate from (R)-pantoate and beta-alanine: step 1/1. Catalyzes the condensation of pantoate with beta-alanine in an ATP-dependent reaction via a pantoyl-adenylate intermediate. This Helicobacter pylori (strain Shi470) protein is Pantothenate synthetase.